We begin with the raw amino-acid sequence, 346 residues long: MLYRSALRTSRAFTPRLALSHSRLVSSLVFLEHKAGKLSEASLSAVTAAKTLGNDTHGLLVGTKSEIENALDRAKEIKGLSKIYLARSDSYSHSLAEALASLLASIVSAKDVSHLFAAHTAVGKNVFPRLAGLLDSSLIADIIALESSGDTFTRPIYAGNAVLTIKSSPKDSVKIVTVRSTAFDKAPVAAGSAVIEDVDIITVDTPTQFVSEELTVSSRPDLASAARVVSGGRALKSKESFDAILNPLADSLGAAVGASRAAVDAGYADNSLQVGQTGKVVAPELYVAIGISGAIQHLAGMKESKMIIAINKDPDAPIFQVADVGLVADLFESVPQLVKELGNVKV.

Position 285-313 (285-313 (LYVAIGISGAIQHLAGMKESKMIIAINKD)) interacts with FAD.

The protein belongs to the ETF alpha-subunit/FixB family. In terms of assembly, heterodimer of an alpha and a beta subunit. The cofactor is FAD.

The protein localises to the mitochondrion matrix. The electron transfer flavoprotein serves as a specific electron acceptor for several dehydrogenases, including five acyl-CoA dehydrogenases, glutaryl-CoA and sarcosine dehydrogenase. It transfers the electrons to the main mitochondrial respiratory chain via ETF-ubiquinone oxidoreductase (ETF dehydrogenase). The protein is Probable electron transfer flavoprotein subunit alpha, mitochondrial (ETF1) of Cryptococcus gattii serotype B (strain WM276 / ATCC MYA-4071) (Filobasidiella gattii).